Reading from the N-terminus, the 118-residue chain is Small ribosomal subunit protein uS13 (118 aa).

The interval 92–118 is disordered; the sequence is RKGLPVRGQRTKTNARTRKGPRKPIRK.

Belongs to the universal ribosomal protein uS13 family. In terms of assembly, part of the 30S ribosomal subunit. Forms a loose heterodimer with protein S19. Forms two bridges to the 50S subunit in the 70S ribosome.

Located at the top of the head of the 30S subunit, it contacts several helices of the 16S rRNA. In the 70S ribosome it contacts the 23S rRNA (bridge B1a) and protein L5 of the 50S subunit (bridge B1b), connecting the 2 subunits; these bridges are implicated in subunit movement. Contacts the tRNAs in the A and P-sites. This chain is Small ribosomal subunit protein uS13, found in Pseudomonas putida (strain ATCC 700007 / DSM 6899 / JCM 31910 / BCRC 17059 / LMG 24140 / F1).